Consider the following 367-residue polypeptide: Methylthioribose-1-phosphate isomerase (367 aa).

Residue Asp-250 is the Proton donor of the active site.

The protein belongs to the eIF-2B alpha/beta/delta subunits family. MtnA subfamily.

The protein resides in the cytoplasm. It localises to the nucleus. The catalysed reaction is 5-(methylsulfanyl)-alpha-D-ribose 1-phosphate = 5-(methylsulfanyl)-D-ribulose 1-phosphate. Its pathway is amino-acid biosynthesis; L-methionine biosynthesis via salvage pathway; L-methionine from S-methyl-5-thio-alpha-D-ribose 1-phosphate: step 1/6. In terms of biological role, catalyzes the interconversion of methylthioribose-1-phosphate (MTR-1-P) into methylthioribulose-1-phosphate (MTRu-1-P). The polypeptide is Methylthioribose-1-phosphate isomerase (IDI2) (Zea mays (Maize)).